We begin with the raw amino-acid sequence, 38 residues long: Large ribosomal subunit protein bL36 (38 aa).

It belongs to the bacterial ribosomal protein bL36 family.

The polypeptide is Large ribosomal subunit protein bL36 (Saccharophagus degradans (strain 2-40 / ATCC 43961 / DSM 17024)).